Reading from the N-terminus, the 152-residue chain is MQIWVDADACPNVIKEVLFRAADRTGMMVTLVANQPLKTPPSKFIRTVQVASGFDVADNEIVQRVEKNDLVITADIPLAAEVIEKGGIALNPRGERYTPDTIRERLNMRDFMDTMRASGIQTGGPNTLNQRDRQQFANELDKWLQQARNQAK.

It belongs to the UPF0178 family.

In Yersinia pseudotuberculosis serotype IB (strain PB1/+), this protein is UPF0178 protein YPTS_2857.